A 72-amino-acid chain; its full sequence is Large ribosomal subunit protein bL31 (72 aa).

Positions 16, 18, 37, and 40 each coordinate Zn(2+).

This sequence belongs to the bacterial ribosomal protein bL31 family. Type A subfamily. As to quaternary structure, part of the 50S ribosomal subunit. It depends on Zn(2+) as a cofactor.

In terms of biological role, binds the 23S rRNA. The protein is Large ribosomal subunit protein bL31 of Pseudomonas fluorescens (strain Pf0-1).